Here is a 186-residue protein sequence, read N- to C-terminus: MTQHSPAFVTPDWLEREQLTDTPTPVFFGWLFNQQSLTRRLDRLSDGGFDIVPLSEGWQALRDDECAALGLPAASEGWVREVYLRGNGENWVFARSVAARDALQHGGLHMDELGTRSLGALLFSDPAFDRGTLQVCHYPQSWLPDADAVSGLWARRSQFSRGALSVLVAEVFLPALWNAIHNKDHA.

3 residues coordinate substrate: Arg80, Leu118, and Glu170.

This sequence belongs to the UbiC family.

Its subcellular location is the cytoplasm. The catalysed reaction is chorismate = 4-hydroxybenzoate + pyruvate. It participates in cofactor biosynthesis; ubiquinone biosynthesis. In terms of biological role, removes the pyruvyl group from chorismate, with concomitant aromatization of the ring, to provide 4-hydroxybenzoate (4HB) for the ubiquinone pathway. The chain is Probable chorismate pyruvate-lyase from Pseudomonas syringae pv. tomato (strain ATCC BAA-871 / DC3000).